A 400-amino-acid polypeptide reads, in one-letter code: Mannitol-1-phosphate 5-dehydrogenase (400 aa).

12–23 (AVHFGAGNIGRG) lines the NAD(+) pocket. K221 is a catalytic residue.

This sequence belongs to the mannitol dehydrogenase family. As to quaternary structure, monomer.

It catalyses the reaction D-mannitol 1-phosphate + NAD(+) = beta-D-fructose 6-phosphate + NADH + H(+). Functionally, catalyzes the NAD(H)-dependent interconversion of D-fructose 6-phosphate and D-mannitol 1-phosphate in the mannitol metabolic pathway. In Pyricularia oryzae (strain Y34) (Rice blast fungus), this protein is Mannitol-1-phosphate 5-dehydrogenase.